Here is a 191-residue protein sequence, read N- to C-terminus: MEYFDMRKMSVNLWRNAAGETREICTFPPAKRDFYWRASIASIAANGEFSLFPGMERIVTLLEGGEMLLESADRFNHTLKPFQPFAFAADQVVKAKLTAGQMSMDFNIMTRLDVCKAKVRIAERTFTTFGSRGGVVFVINGAWQLGDKLLTTDQGACWFDGRHTLRLLQPQGKLLFSEINWLAGHSPDQVQ.

The protein belongs to the Ves family.

The protein is Protein Ves of Escherichia coli (strain K12 / MC4100 / BW2952).